Consider the following 86-residue polypeptide: Cytochrome c6 (86 aa).

Positions 14, 17, 18, and 58 each coordinate heme c.

This sequence belongs to the cytochrome c family. PetJ subfamily. In terms of assembly, monomer. In terms of processing, binds 1 heme c group covalently per subunit.

It is found in the cellular thylakoid lumen. Its function is as follows. Functions as an electron carrier between membrane-bound cytochrome b6-f and photosystem I in oxygenic photosynthesis. The chain is Cytochrome c6 (petJ) from Anabaena variabilis.